Here is a 290-residue protein sequence, read N- to C-terminus: tRNA(Ile)-lysidine synthase (290 aa).

12–17 (SGGSDS) provides a ligand contact to ATP.

The protein belongs to the tRNA(Ile)-lysidine synthase family.

The protein localises to the cytoplasm. It catalyses the reaction cytidine(34) in tRNA(Ile2) + L-lysine + ATP = lysidine(34) in tRNA(Ile2) + AMP + diphosphate + H(+). Its function is as follows. Ligates lysine onto the cytidine present at position 34 of the AUA codon-specific tRNA(Ile) that contains the anticodon CAU, in an ATP-dependent manner. Cytidine is converted to lysidine, thus changing the amino acid specificity of the tRNA from methionine to isoleucine. This is tRNA(Ile)-lysidine synthase from Mycoplasma genitalium (strain ATCC 33530 / DSM 19775 / NCTC 10195 / G37) (Mycoplasmoides genitalium).